Consider the following 252-residue polypeptide: 3-dehydroquinate dehydratase (252 aa).

Residues S21, E46–R48, and R82 each bind 3-dehydroquinate. H143 acts as the Proton donor/acceptor in catalysis. The Schiff-base intermediate with substrate role is filled by K170. Residues R213, S232, and Q236 each contribute to the 3-dehydroquinate site.

The protein belongs to the type-I 3-dehydroquinase family. In terms of assembly, homodimer.

It carries out the reaction 3-dehydroquinate = 3-dehydroshikimate + H2O. It participates in metabolic intermediate biosynthesis; chorismate biosynthesis; chorismate from D-erythrose 4-phosphate and phosphoenolpyruvate: step 3/7. Functionally, involved in the third step of the chorismate pathway, which leads to the biosynthesis of aromatic amino acids. Catalyzes the cis-dehydration of 3-dehydroquinate (DHQ) and introduces the first double bond of the aromatic ring to yield 3-dehydroshikimate. This Salmonella dublin (strain CT_02021853) protein is 3-dehydroquinate dehydratase.